The sequence spans 274 residues: Urease accessory protein UreD (274 aa).

Belongs to the UreD family. In terms of assembly, ureD, UreF and UreG form a complex that acts as a GTP-hydrolysis-dependent molecular chaperone, activating the urease apoprotein by helping to assemble the nickel containing metallocenter of UreC. The UreE protein probably delivers the nickel.

It is found in the cytoplasm. Its function is as follows. Required for maturation of urease via the functional incorporation of the urease nickel metallocenter. The chain is Urease accessory protein UreD from Klebsiella pneumoniae subsp. pneumoniae (strain ATCC 700721 / MGH 78578).